Reading from the N-terminus, the 99-residue chain is Aspartyl/glutamyl-tRNA(Asn/Gln) amidotransferase subunit C (99 aa).

Belongs to the GatC family. Heterotrimer of A, B and C subunits.

The enzyme catalyses L-glutamyl-tRNA(Gln) + L-glutamine + ATP + H2O = L-glutaminyl-tRNA(Gln) + L-glutamate + ADP + phosphate + H(+). The catalysed reaction is L-aspartyl-tRNA(Asn) + L-glutamine + ATP + H2O = L-asparaginyl-tRNA(Asn) + L-glutamate + ADP + phosphate + 2 H(+). Its function is as follows. Allows the formation of correctly charged Asn-tRNA(Asn) or Gln-tRNA(Gln) through the transamidation of misacylated Asp-tRNA(Asn) or Glu-tRNA(Gln) in organisms which lack either or both of asparaginyl-tRNA or glutaminyl-tRNA synthetases. The reaction takes place in the presence of glutamine and ATP through an activated phospho-Asp-tRNA(Asn) or phospho-Glu-tRNA(Gln). This Burkholderia lata (strain ATCC 17760 / DSM 23089 / LMG 22485 / NCIMB 9086 / R18194 / 383) protein is Aspartyl/glutamyl-tRNA(Asn/Gln) amidotransferase subunit C.